The following is a 269-amino-acid chain: Dynein regulatory complex protein 8 (269 aa).

The tract at residues 1–113 (MLGPGQVRLR…RTGKGLGYNS (113 aa)) is disordered. A compositionally biased stretch (low complexity) spans 54 to 76 (AQGSSSPGIQSGPSSRPGSPRGA). EF-hand domains are found at residues 150–185 (EFHK…LGCC) and 228–263 (IPED…EDGV).

Belongs to the DRC8 family. In terms of assembly, component of the nexin-dynein regulatory complex (N-DRC).

The protein localises to the cytoplasm. It localises to the cytoskeleton. Its subcellular location is the flagellum axoneme. In terms of biological role, component of the nexin-dynein regulatory complex (N-DRC), a key regulator of ciliary/flagellar motility which maintains the alignment and integrity of the distal axoneme and regulates microtubule sliding in motile axonemes. This Homo sapiens (Human) protein is Dynein regulatory complex protein 8 (EFCAB2).